A 264-amino-acid chain; its full sequence is ATP synthase subunit a (264 aa).

6 helical membrane-spanning segments follow: residues 27–47, 87–107, 131–151, 172–192, 196–216, and 230–250; these read VHLD…FVFS, VGPL…IDLI, DISG…FYTI, LLIP…PVSL, LFGN…MYMA, and LAWA…FMML.

This sequence belongs to the ATPase A chain family. F-type ATPases have 2 components, CF(1) - the catalytic core - and CF(0) - the membrane proton channel. CF(1) has five subunits: alpha(3), beta(3), gamma(1), delta(1), epsilon(1). CF(0) has three main subunits: a(1), b(2) and c(9-12). The alpha and beta chains form an alternating ring which encloses part of the gamma chain. CF(1) is attached to CF(0) by a central stalk formed by the gamma and epsilon chains, while a peripheral stalk is formed by the delta and b chains.

Its subcellular location is the cell inner membrane. Its function is as follows. Key component of the proton channel; it plays a direct role in the translocation of protons across the membrane. The chain is ATP synthase subunit a from Pasteurella multocida (strain Pm70).